We begin with the raw amino-acid sequence, 504 residues long: Anaerobic nitric oxide reductase transcription regulator NorR (504 aa).

The residue at position 57 (D57) is a 4-aspartylphosphate. One can recognise a Sigma-54 factor interaction domain in the interval 187-416 (MIGLSPGMTQ…LEHAIHRAVV (230 aa)). ATP-binding positions include 215–222 (GETGTGKE) and 278–287 (ADNGTLFLDE). Residues 479-498 (WAACARMLETDVANLHRLAK) constitute a DNA-binding region (H-T-H motif).

It functions in the pathway nitrogen metabolism; nitric oxide reduction. Its function is as follows. Required for the expression of anaerobic nitric oxide (NO) reductase, acts as a transcriptional activator for at least the norVW operon. Activation also requires sigma-54. The protein is Anaerobic nitric oxide reductase transcription regulator NorR of Shigella boydii serotype 4 (strain Sb227).